Consider the following 341-residue polypeptide: KH domain-containing RNA-binding protein QKI (341 aa).

The qua1 domain; involved in homodimerization stretch occupies residues 11 to 82 (PNPTPDYLMQ…PDAVGPIVQL (72 aa)). Positions 87 to 153 (YVPVKEYPDF…WEHLNEDLHV (67 aa)) constitute a KH domain. The interval 182–213 (AAEGEDSLKKMQLMELAILNGTYRDANIKSPA) is qua2 domain; involved in RNA binding. The residue at position 188 (S188) is a Phosphoserine. R227 bears the Omega-N-methylarginine mark. R242 carries the asymmetric dimethylarginine; by CARM1; alternate modification. R242 is modified (omega-N-methylarginine; alternate). An Omega-N-methylarginine modification is found at R256. The SH3-binding signature appears at 276–279 (PPGP). The Nuclear localization signal signature appears at 324 to 330 (RVHPYQR).

It belongs to the quaking family. As to quaternary structure, homodimer; does not require RNA to homodimerize. Able to heterodimerize with BICC1. Methylated by PRMT1. In terms of processing, tyrosine phosphorylated at its C-terminus, probably by FYN. Phosphorylation leads to decreased mRNA-binding affinity, affecting transport and/or stabilization of MBP mRNA. Post-translationally, ubiquitinated by RNF6 in macrophages, leading to its degradation. Present in myelinating oligodendrocytes (at protein level).

The protein resides in the nucleus. Its subcellular location is the cytoplasm. Functionally, RNA reader protein, which recognizes and binds specific RNAs, thereby regulating RNA metabolic processes, such as pre-mRNA splicing, circular RNA (circRNA) formation, mRNA export, mRNA stability and/or translation. Involved in various cellular processes, such as mRNA storage into stress granules, apoptosis, lipid deposition, interferon response, glial cell fate and development. Binds to the 5'-NACUAAY-N(1,20)-UAAY-3' RNA core sequence. Acts as a mRNA modification reader that specifically recognizes and binds mRNA transcripts modified by internal N(7)-methylguanine (m7G). Promotes the formation of circular RNAs (circRNAs) during the epithelial to mesenchymal transition and in cardiomyocytes: acts by binding to sites flanking circRNA-forming exons. CircRNAs are produced by back-splicing circularization of pre-mRNAs. Plays a central role in myelinization via 3 distinct mechanisms. First, acts by protecting and promoting stability of target mRNAs such as MBP, SIRT2 and CDKN1B, which promotes oligodendrocyte differentiation. Second, participates in mRNA transport by regulating the nuclear export of MBP mRNA. Finally, indirectly regulates mRNA splicing of MAG pre-mRNA during oligodendrocyte differentiation by acting as a negative regulator of MAG exon 12 alternative splicing: acts by binding to HNRNPA1 mRNA splicing factor, preventing its translation. Involved in microglia differentiation and remyelination by regulating microexon alternative splicing of the Rho GTPase pathway. Involved in macrophage differentiation: promotes monocyte differentiation by regulating pre-mRNA splicing in naive peripheral blood monocytes. Acts as an important regulator of muscle development: required for the contractile function of cardiomyocytes by regulating alternative splicing of cardiomyocyte transcripts. Acts as a negative regulator of thermogenesis by decreasing stability, nuclear export and translation of mRNAs encoding PPARGC1A and UCP1. Also required for visceral endoderm function and blood vessel development. May also play a role in smooth muscle development. In addition to its RNA-binding activity, also acts as a nuclear transcription coactivator for SREBF2/SREBP2. The protein is KH domain-containing RNA-binding protein QKI of Rattus norvegicus (Rat).